We begin with the raw amino-acid sequence, 333 residues long: Complement C1q and tumor necrosis factor-related protein 9 (333 aa).

The first 19 residues, 1–19 (MRIWWLLLVMGACTRSVFS), serve as a signal peptide directing secretion. Residues 22 to 194 (TCRQGHSGIP…GDRGEKGKVG (173 aa)) are disordered. Collagen-like domains are found at residues 24–82 (RQGH…DGRV), 84–130 (AKGI…KGEV), and 134–193 (GPEG…KGKV). A 4-hydroxyproline mark is found at Pro31, Pro34, and Pro40. Residues 42-57 (RDGRDGAKGDKGDAGE) show a composition bias toward basic and acidic residues. 4-hydroxyproline occurs at positions 58, 61, and 64. Residues 67 to 88 (DGIRGEKGEPGADGRVEAKGIK) are compositionally biased toward basic and acidic residues. Position 73 is a 5-hydroxylysine (Lys73). Lys73 carries an O-linked (Gal...) hydroxylysine glycan. A 4-hydroxyproline mark is found at Pro76 and Pro115. Lys127 bears the 5-hydroxylysine mark. Lys127 carries O-linked (Gal...) hydroxylysine glycosylation. A 4-hydroxyproline mark is found at Pro151, Pro160, and Pro175. The span at 183–193 (WKGDRGEKGKV) shows a compositional bias: basic and acidic residues. The region spanning 197–333 (PLVPKSAFTV…FTGFLLFSSS (137 aa)) is the C1q domain.

Multimers (predominantly trimers). Interacts with ADIPOQ via the C1q domain to form a heterotrimeric complex. The isomeric forms of the hydroxylated amino acids could not be determined in the mass-spectrometric methods reported in PubMed:18787108 but are assumed on the basis of their occurrence in collagen-like domains. In terms of tissue distribution, expressed predominantly in adipose tissue. Females express higher levels than males.

It localises to the secreted. In terms of biological role, probable adipokine. Activates AMPK, AKT, and p44/42 MAPK signaling pathways. This chain is Complement C1q and tumor necrosis factor-related protein 9 (C1qtnf9), found in Mus musculus (Mouse).